Here is a 525-residue protein sequence, read N- to C-terminus: MLWLWLGLSGQKLLLWGAASAVSVAGATVLLNILQMLVSYARKWQQMRPIPSVARAYPLVGHALFMKPNNTEFFQQIIQYTEEFRHLPIIKLWIGPVPLVALYKAENVEVILTSSKQIDKSFMYKFLQPWLGLGLLTSTGSKWRARRKMLTPSFHFTILEDFLDVMNEQANILVNKLEKHVNQEAFNCFFPITLCALDIICETAMGKNIGAQSNGDSEYVRTVYRMSDMIYRRMKMPWFWFDLWYLMFKEGRDHKKGLKSLHTFTNNVIAERVNARKAEQDCIGAGRGPLPSKTKRKAFLDLLLSVTDEEGNKLSHEDIREEVDTFMFEGHDTTAAAINWSLYLLGSNPEVQRKVDKELDDVFGRSHRPVTLEDLKKLKYLDCVIKETLRVFPSVPLFARSLSEDCEVAGYKISKGTEAVIIPYALHRDPRYFPDPEEFQPERFFPENSQGRHPYAYVPFSAGPRNCIGQKFAVMEEKTILACILREFWIESNQKREELGLAGDLILRPNNGIWIKLKRRHEDDP.

A helical transmembrane segment spans residues 13-33; the sequence is LLLWGAASAVSVAGATVLLNI. Heme is bound by residues E329 and C467.

This sequence belongs to the cytochrome P450 family. It depends on heme as a cofactor.

The protein resides in the endoplasmic reticulum membrane. It carries out the reaction dodecanoate + reduced [NADPH--hemoprotein reductase] + O2 = 12-hydroxydodecanoate + oxidized [NADPH--hemoprotein reductase] + H2O + H(+). The catalysed reaction is tetradecanoate + reduced [NADPH--hemoprotein reductase] + O2 = 14-hydroxytetradecanoate + oxidized [NADPH--hemoprotein reductase] + H2O + H(+). The enzyme catalyses hexadecanoate + reduced [NADPH--hemoprotein reductase] + O2 = 16-hydroxyhexadecanoate + oxidized [NADPH--hemoprotein reductase] + H2O + H(+). It catalyses the reaction (5Z,8Z,11Z,14Z,17Z)-eicosapentaenoate + reduced [NADPH--hemoprotein reductase] + O2 = 20-hydroxy-(5Z,8Z,11Z,14Z,17Z)-eicosapentaenoate + oxidized [NADPH--hemoprotein reductase] + H2O + H(+). It carries out the reaction (4Z,7Z,10Z,13Z,16Z,19Z)-docosahexaenoate + reduced [NADPH--hemoprotein reductase] + O2 = 22-hydroxy-(4Z,7Z,10Z,13Z,16Z,19Z)-docosahexaenoate + oxidized [NADPH--hemoprotein reductase] + H2O + H(+). Its pathway is lipid metabolism; fatty acid metabolism. Inhibited by N-hydroxy-N'-(4-n-butyl-2-methylphenyl formamidine)(HET0016) with an IC(50) of 38 nM. A cytochrome P450 monooxygenase involved in fatty acid metabolism in the eye. Catalyzes the omega-hydroxylation of polyunsaturated fatty acids (PUFAs) docosahexaenoate (DHA) and its precursor eicosapentaenoate (EPA), and may contribute to the homeostasis of these retinal PUFAs. Omega hydroxylates saturated fatty acids such as laurate, myristate and palmitate, the catalytic efficiency decreasing in the following order: myristate &gt; laurate &gt; palmitate (C14&gt;C12&gt;C16). Mechanistically, uses molecular oxygen inserting one oxygen atom into a substrate, and reducing the second into a water molecule, with two electrons provided by NADPH via cytochrome P450 reductase (CPR; NADPH-ferrihemoprotein reductase). This is Cytochrome P450 4V2 (Cyp4v2) from Rattus norvegicus (Rat).